The chain runs to 325 residues: Elongation factor P--(R)-beta-lysine ligase (325 aa).

76-78 (SPE) contacts substrate. ATP contacts are provided by residues 100-102 (RNE) and Asn-109. A substrate-binding site is contributed by Tyr-118. Residue 244–245 (EL) coordinates ATP. Glu-251 is a binding site for substrate. Gly-300 serves as a coordination point for ATP.

This sequence belongs to the class-II aminoacyl-tRNA synthetase family. EpmA subfamily. Homodimer.

It carries out the reaction D-beta-lysine + L-lysyl-[protein] + ATP = N(6)-((3R)-3,6-diaminohexanoyl)-L-lysyl-[protein] + AMP + diphosphate + H(+). Its function is as follows. With EpmB is involved in the beta-lysylation step of the post-translational modification of translation elongation factor P (EF-P). Catalyzes the ATP-dependent activation of (R)-beta-lysine produced by EpmB, forming a lysyl-adenylate, from which the beta-lysyl moiety is then transferred to the epsilon-amino group of a conserved specific lysine residue in EF-P. The sequence is that of Elongation factor P--(R)-beta-lysine ligase from Klebsiella pneumoniae (strain 342).